The chain runs to 34 residues: COP9 signalosome complex subunit 5a (34 aa).

The protein belongs to the peptidase M67A family. CSN5 subfamily. In terms of assembly, component of the CSN complex, probably composed of CSN1, CSN2, CSN3, CSN4, CSN5 (CSN5A or CSN5B), CSN6 (CSN6A or CSN6B), CSN7 and CSN8. Requires a divalent metal cation as cofactor.

Its subcellular location is the cytoplasm. The protein resides in the nucleus. Its function is as follows. Probable protease subunit of the COP9 signalosome complex (CSN), a complex involved in various cellular and developmental processes such as photomorphogenesis and auxin and jasmonate responses. The CSN complex is an essential regulator of the ubiquitin (Ubl) conjugation pathway by mediating the deneddylation of the cullin subunits of the SCF-type E3 ligase complexes, leading to decrease the Ubl ligase activity of SCF. In the complex, it probably acts as the catalytic center that mediates the cleavage of Nedd8 from cullins. It however has no metalloprotease activity by itself and requires the other subunits of the CSN complex. The CSN complex is involved in repression of photomorphogenesis in darkness by regulating the activity of COP1-containing Ubl ligase complexes. In Brassica oleracea (Wild cabbage), this protein is COP9 signalosome complex subunit 5a (CSN5A).